A 1062-amino-acid polypeptide reads, in one-letter code: SLIT-ROBO Rho GTPase-activating protein 1 (1062 aa).

The F-BAR domain occupies serine 19–aspartate 314. Residues glutamine 352–alanine 382 adopt a coiled-coil conformation. Serine 416 bears the Phosphoserine mark. The Rho-GAP domain occupies glycine 481–phenylalanine 671. The SH3 domain occupies cysteine 720–methionine 779. The span at aspartate 785 to proline 799 shows a compositional bias: polar residues. Residues aspartate 785 to aspartate 931 form a disordered region. Serine 812 and serine 894 each carry phosphoserine. A compositionally biased stretch (basic and acidic residues) spans serine 899–aspartate 908. Serine 909 is subject to Phosphoserine. Over residues arginine 914 to glycine 923 the composition is skewed to polar residues. Residues glutamate 933–lysine 960 adopt a coiled-coil conformation. A compositionally biased stretch (polar residues) spans lysine 974–proline 988. Disordered stretches follow at residues lysine 974–serine 1013 and lysine 1028–methionine 1062. Serine 976 is modified (phosphoserine). Threonine 978 is subject to Phosphothreonine. Over residues serine 1004 to serine 1013 the composition is skewed to low complexity. The residue at position 1009 (serine 1009) is a Phosphoserine. Positions glutamine 1053–methionine 1062 are enriched in polar residues.

Homodimer. Forms a heterooligomer with SRGAP2 and SRGAP3 through its F-BAR domain. Interacts with CDC42 and RHOA. Interacts with FASLG. Interacts (via SH3 domain) with ROBO1.

Functionally, GTPase-activating protein for RhoA and Cdc42 small GTPases. Together with CDC42 seems to be involved in the pathway mediating the repulsive signaling of Robo and Slit proteins in neuronal migration. SLIT2, probably through interaction with ROBO1, increases the interaction of SRGAP1 with ROBO1 and inactivates CDC42. This Mus musculus (Mouse) protein is SLIT-ROBO Rho GTPase-activating protein 1 (Srgap1).